A 453-amino-acid polypeptide reads, in one-letter code: Serine/threonine-protein phosphatase 2A 55 kDa regulatory subunit B delta isoform (453 aa).

WD repeat units lie at residues 32-71 (AEADIISTVEFNYSGDLLATGDKGGRVVIFQREQENKSRP), 97-138 (EIEE…KRAE), 181-219 (AHTYHINSISVNSDHETYLSADDLRINLWHLEITDRSFN), and 230-270 (ELTE…LCDR). Phosphoserine is present on S285. WD repeat units lie at residues 289 to 327 (EIISSISDVKFSHSGRYMMTRDYLSVKVWDLNMESRPVE), 344 to 385 (ENDC…DVTL), and 420 to 452 (DFNKKILHTAWHPVDNVIAVAATNNLYIFQDKI). Residue Y305 is modified to Phosphotyrosine. T308 carries the phosphothreonine modification.

This sequence belongs to the phosphatase 2A regulatory subunit B family. In terms of assembly, PP2A consists of a common heterodimeric core enzyme, composed of a 36 kDa catalytic subunit (subunit C) and a 65 kDa constant regulatory subunit (PR65 or subunit A), that associates with a variety of regulatory subunits. Proteins that associate with the core dimer include three families of regulatory subunits B (the R2/B/PR55/B55, R3/B''/PR72/PR130/PR59 and R5/B'/B56 families), the 48 kDa variable regulatory subunit, viral proteins, and cell signaling molecules. Interacts with ENSA (when phosphorylated at 'Ser-67') and ARPP19 (when phosphorylated at 'Ser-62'), leading to inhibit PP2A activity. Interacts with IER5.

It localises to the cytoplasm. Substrate-recognition subunit of protein phosphatase 2A (PP2A) that plays a key role in cell cycle by controlling mitosis entry and exit. Involved in chromosome clustering during late mitosis by mediating dephosphorylation of MKI67. The activity of PP2A complexes containing PPP2R2D (PR55-delta) fluctuate during the cell cycle: the activity is high in interphase and low in mitosis. This is Serine/threonine-protein phosphatase 2A 55 kDa regulatory subunit B delta isoform (PPP2R2D) from Homo sapiens (Human).